We begin with the raw amino-acid sequence, 429 residues long: Histidine--tRNA ligase (429 aa).

It belongs to the class-II aminoacyl-tRNA synthetase family. In terms of assembly, homodimer.

It is found in the cytoplasm. The catalysed reaction is tRNA(His) + L-histidine + ATP = L-histidyl-tRNA(His) + AMP + diphosphate + H(+). The chain is Histidine--tRNA ligase from Stutzerimonas stutzeri (strain A1501) (Pseudomonas stutzeri).